We begin with the raw amino-acid sequence, 131 residues long: Nitrogenase-stabilizing/protective protein NifW (131 aa).

This sequence belongs to the NifW family. Homotrimer; associates with NifD.

Its function is as follows. May protect the nitrogenase Fe-Mo protein from oxidative damage. The chain is Nitrogenase-stabilizing/protective protein NifW from Frankia alni (strain DSM 45986 / CECT 9034 / ACN14a).